The chain runs to 448 residues: Homogentisate 1,2-dioxygenase (448 aa).

Positions 340, 346, and 377 each coordinate Fe cation.

This sequence belongs to the homogentisate dioxygenase family. Requires Fe cation as cofactor.

The enzyme catalyses homogentisate + O2 = 4-maleylacetoacetate + H(+). The protein operates within amino-acid degradation; L-phenylalanine degradation; acetoacetate and fumarate from L-phenylalanine: step 4/6. The polypeptide is Homogentisate 1,2-dioxygenase (hmgA) (Emericella nidulans (strain FGSC A4 / ATCC 38163 / CBS 112.46 / NRRL 194 / M139) (Aspergillus nidulans)).